The chain runs to 298 residues: Acetyl-coenzyme A carboxylase carboxyl transferase subunit beta (298 aa).

A CoA carboxyltransferase N-terminal domain is found at 26 to 295 (LWIKCPETGE…DNANAVVPLA (270 aa)).

Belongs to the AccD/PCCB family. In terms of assembly, acetyl-CoA carboxylase is a heterohexamer composed of biotin carboxyl carrier protein (AccB), biotin carboxylase (AccC) and two subunits each of ACCase subunit alpha (AccA) and ACCase subunit beta (AccD).

It localises to the cytoplasm. The enzyme catalyses N(6)-carboxybiotinyl-L-lysyl-[protein] + acetyl-CoA = N(6)-biotinyl-L-lysyl-[protein] + malonyl-CoA. It functions in the pathway lipid metabolism; malonyl-CoA biosynthesis; malonyl-CoA from acetyl-CoA: step 1/1. Functionally, component of the acetyl coenzyme A carboxylase (ACC) complex. Biotin carboxylase (BC) catalyzes the carboxylation of biotin on its carrier protein (BCCP) and then the CO(2) group is transferred by the transcarboxylase to acetyl-CoA to form malonyl-CoA. In Agrobacterium fabrum (strain C58 / ATCC 33970) (Agrobacterium tumefaciens (strain C58)), this protein is Acetyl-coenzyme A carboxylase carboxyl transferase subunit beta.